The primary structure comprises 246 residues: MDQGPINRPHFFFTTAPMPCPYLEGHLERKMVTDLTGPEAERLHESLSRAGFRRSHTIAYAPVCPGCTACVPVRIRARAFVKNKSFRRIVRANAGVTAEYVPARATVEQFHLFSQYQQARHGESDMALMGFFDYRSMVEDSPISTSIAEFREAGGELVAACLIDHLSDGLSAVYSFFNTTLPQSRGLGTWMILWMVDETVRRDLDHVYLGYWIAESSKMAYKERFQPLEVFGRRGWIAFDERGRPG.

This sequence belongs to the R-transferase family. Bpt subfamily.

The protein resides in the cytoplasm. It catalyses the reaction N-terminal L-glutamyl-[protein] + L-leucyl-tRNA(Leu) = N-terminal L-leucyl-L-glutamyl-[protein] + tRNA(Leu) + H(+). The enzyme catalyses N-terminal L-aspartyl-[protein] + L-leucyl-tRNA(Leu) = N-terminal L-leucyl-L-aspartyl-[protein] + tRNA(Leu) + H(+). Functionally, functions in the N-end rule pathway of protein degradation where it conjugates Leu from its aminoacyl-tRNA to the N-termini of proteins containing an N-terminal aspartate or glutamate. The sequence is that of Aspartate/glutamate leucyltransferase from Rhodospirillum rubrum (strain ATCC 11170 / ATH 1.1.1 / DSM 467 / LMG 4362 / NCIMB 8255 / S1).